Consider the following 416-residue polypeptide: Gamma-glutamyl phosphate reductase (416 aa).

The protein belongs to the gamma-glutamyl phosphate reductase family.

Its subcellular location is the cytoplasm. The enzyme catalyses L-glutamate 5-semialdehyde + phosphate + NADP(+) = L-glutamyl 5-phosphate + NADPH + H(+). The protein operates within amino-acid biosynthesis; L-proline biosynthesis; L-glutamate 5-semialdehyde from L-glutamate: step 2/2. In terms of biological role, catalyzes the NADPH-dependent reduction of L-glutamate 5-phosphate into L-glutamate 5-semialdehyde and phosphate. The product spontaneously undergoes cyclization to form 1-pyrroline-5-carboxylate. This is Gamma-glutamyl phosphate reductase from Vibrio cholerae serotype O1 (strain ATCC 39541 / Classical Ogawa 395 / O395).